A 159-amino-acid chain; its full sequence is Transcriptional repressor NrdR (159 aa).

The segment at 3 to 34 is a zinc-finger region; the sequence is CPFCGSDNTSVKDSRAAEDDTAVRRRRVCESC. In terms of domain architecture, ATP-cone spans 49–139; sequence IIVVKRDGKR…VYRDFKDPSD (91 aa).

It belongs to the NrdR family. Zn(2+) serves as cofactor.

In terms of biological role, negatively regulates transcription of bacterial ribonucleotide reductase nrd genes and operons by binding to NrdR-boxes. This chain is Transcriptional repressor NrdR, found in Hyphomonas neptunium (strain ATCC 15444).